Reading from the N-terminus, the 102-residue chain is Small ribosomal subunit protein uS10 (102 aa).

The tract at residues 34–58 (VSGPVPLPTKTLEVPSRKSPDGEGT) is disordered.

This sequence belongs to the universal ribosomal protein uS10 family. In terms of assembly, part of the 30S ribosomal subunit.

Functionally, involved in the binding of tRNA to the ribosomes. This Halobacterium salinarum (strain ATCC 29341 / DSM 671 / R1) protein is Small ribosomal subunit protein uS10.